A 148-amino-acid polypeptide reads, in one-letter code: NADPH-dependent 7-cyano-7-deazaguanine reductase (148 aa).

Catalysis depends on Cys-50, which acts as the Thioimide intermediate. The Proton donor role is filled by Asp-57. Substrate-binding positions include 72-74 (VES) and 91-92 (HE).

It belongs to the GTP cyclohydrolase I family. QueF type 1 subfamily.

The protein resides in the cytoplasm. It catalyses the reaction 7-aminomethyl-7-carbaguanine + 2 NADP(+) = 7-cyano-7-deazaguanine + 2 NADPH + 3 H(+). It participates in tRNA modification; tRNA-queuosine biosynthesis. Functionally, catalyzes the NADPH-dependent reduction of 7-cyano-7-deazaguanine (preQ0) to 7-aminomethyl-7-deazaguanine (preQ1). The chain is NADPH-dependent 7-cyano-7-deazaguanine reductase from Helicobacter pylori (strain HPAG1).